The following is a 369-amino-acid chain: Anhydro-N-acetylmuramic acid kinase (369 aa).

12-19 serves as a coordination point for ATP; that stretch reads GTSMDGVD.

This sequence belongs to the anhydro-N-acetylmuramic acid kinase family.

It carries out the reaction 1,6-anhydro-N-acetyl-beta-muramate + ATP + H2O = N-acetyl-D-muramate 6-phosphate + ADP + H(+). The protein operates within amino-sugar metabolism; 1,6-anhydro-N-acetylmuramate degradation. It functions in the pathway cell wall biogenesis; peptidoglycan recycling. Its function is as follows. Catalyzes the specific phosphorylation of 1,6-anhydro-N-acetylmuramic acid (anhMurNAc) with the simultaneous cleavage of the 1,6-anhydro ring, generating MurNAc-6-P. Is required for the utilization of anhMurNAc either imported from the medium or derived from its own cell wall murein, and thus plays a role in cell wall recycling. The protein is Anhydro-N-acetylmuramic acid kinase of Shewanella woodyi (strain ATCC 51908 / MS32).